A 471-amino-acid polypeptide reads, in one-letter code: ATP synthase subunit beta 1 (471 aa).

157-164 (GGAGVGKT) is a binding site for ATP.

This sequence belongs to the ATPase alpha/beta chains family. F-type ATPases have 2 components, CF(1) - the catalytic core - and CF(0) - the membrane proton channel. CF(1) has five subunits: alpha(3), beta(3), gamma(1), delta(1), epsilon(1). CF(0) has three main subunits: a(1), b(2) and c(9-12). The alpha and beta chains form an alternating ring which encloses part of the gamma chain. CF(1) is attached to CF(0) by a central stalk formed by the gamma and epsilon chains, while a peripheral stalk is formed by the delta and b chains.

It localises to the cell inner membrane. The catalysed reaction is ATP + H2O + 4 H(+)(in) = ADP + phosphate + 5 H(+)(out). In terms of biological role, produces ATP from ADP in the presence of a proton gradient across the membrane. The catalytic sites are hosted primarily by the beta subunits. The protein is ATP synthase subunit beta 1 of Pelobacter propionicus (strain DSM 2379 / NBRC 103807 / OttBd1).